The sequence spans 301 residues: Acetylglutamate kinase (301 aa).

Substrate contacts are provided by residues 68 to 69 (GG), Arg90, and Asn195.

It belongs to the acetylglutamate kinase family. ArgB subfamily.

It localises to the cytoplasm. The catalysed reaction is N-acetyl-L-glutamate + ATP = N-acetyl-L-glutamyl 5-phosphate + ADP. Its pathway is amino-acid biosynthesis; L-arginine biosynthesis; N(2)-acetyl-L-ornithine from L-glutamate: step 2/4. Its function is as follows. Catalyzes the ATP-dependent phosphorylation of N-acetyl-L-glutamate. The protein is Acetylglutamate kinase of Pseudomonas putida (strain ATCC 700007 / DSM 6899 / JCM 31910 / BCRC 17059 / LMG 24140 / F1).